The chain runs to 172 residues: Large ribosomal subunit protein uL10 (172 aa).

This sequence belongs to the universal ribosomal protein uL10 family. Part of the ribosomal stalk of the 50S ribosomal subunit. The N-terminus interacts with L11 and the large rRNA to form the base of the stalk. The C-terminus forms an elongated spine to which L12 dimers bind in a sequential fashion forming a multimeric L10(L12)X complex.

In terms of biological role, forms part of the ribosomal stalk, playing a central role in the interaction of the ribosome with GTP-bound translation factors. This Parvibaculum lavamentivorans (strain DS-1 / DSM 13023 / NCIMB 13966) protein is Large ribosomal subunit protein uL10.